The following is a 327-amino-acid chain: Acetyl-coenzyme A carboxylase carboxyl transferase subunit alpha (327 aa).

Residues 46–299 (LEARAIQLRR…RQVLLRHLKD (254 aa)) form the CoA carboxyltransferase C-terminal domain.

Belongs to the AccA family. As to quaternary structure, acetyl-CoA carboxylase is a heterohexamer composed of biotin carboxyl carrier protein (AccB), biotin carboxylase (AccC) and two subunits each of ACCase subunit alpha (AccA) and ACCase subunit beta (AccD).

It is found in the cytoplasm. It catalyses the reaction N(6)-carboxybiotinyl-L-lysyl-[protein] + acetyl-CoA = N(6)-biotinyl-L-lysyl-[protein] + malonyl-CoA. It participates in lipid metabolism; malonyl-CoA biosynthesis; malonyl-CoA from acetyl-CoA: step 1/1. Its function is as follows. Component of the acetyl coenzyme A carboxylase (ACC) complex. First, biotin carboxylase catalyzes the carboxylation of biotin on its carrier protein (BCCP) and then the CO(2) group is transferred by the carboxyltransferase to acetyl-CoA to form malonyl-CoA. This is Acetyl-coenzyme A carboxylase carboxyl transferase subunit alpha from Synechococcus elongatus (strain ATCC 33912 / PCC 7942 / FACHB-805) (Anacystis nidulans R2).